Here is a 204-residue protein sequence, read N- to C-terminus: MAETARTAPAVDFVGGAVGYRFRTQAGRSHALLKATGLSPTRSLHVIDATAGLGRDAFLLASMGATVTLIERVPEVHALLADALEAARAESDELAAIIGRMTLLHGDARVLLPTLQADVITIDPMHPPRTKTALVKQEMRLLRDLVGADPDVGELLAAALSADCGRVVLKWPLRAAAPPASRKPSHQIAGKTVRYDVYVRPRAT.

S-adenosyl-L-methionine contacts are provided by residues 55 to 56 (RD), 71 to 72 (ER), and Asp123.

It belongs to the methyltransferase superfamily. RsmJ family.

It localises to the cytoplasm. It carries out the reaction guanosine(1516) in 16S rRNA + S-adenosyl-L-methionine = N(2)-methylguanosine(1516) in 16S rRNA + S-adenosyl-L-homocysteine + H(+). In terms of biological role, specifically methylates the guanosine in position 1516 of 16S rRNA. In Rhodopseudomonas palustris (strain TIE-1), this protein is Ribosomal RNA small subunit methyltransferase J.